A 491-amino-acid chain; its full sequence is Chromosomal replication initiator protein DnaA (491 aa).

The domain I, interacts with DnaA modulators stretch occupies residues 1–69; sequence MTTWDKCLKK…TIQECHGNDL (69 aa). Residues 69–154 are domain II; that stretch reads LIIEYSNKKF…KEDEEYSFGL (86 aa). The interval 155–371 is domain III, AAA+ region; sequence PLKEKYVFDS…GALNRVLTTS (217 aa). Residues G199, G201, K202, and T203 each contribute to the ATP site. The segment at 372–491 is domain IV, binds dsDNA; it reads KFNHKDPTIE…YELLLDKISR (120 aa).

The protein belongs to the DnaA family. In terms of assembly, oligomerizes as a right-handed, spiral filament on DNA at oriC.

Its subcellular location is the cytoplasm. Its function is as follows. Plays an essential role in the initiation and regulation of chromosomal replication. ATP-DnaA binds to the origin of replication (oriC) to initiate formation of the DNA replication initiation complex once per cell cycle. Binds the DnaA box (a 9 base pair repeat at the origin) and separates the double-stranded (ds)DNA. Forms a right-handed helical filament on oriC DNA; dsDNA binds to the exterior of the filament while single-stranded (ss)DNA is stabiized in the filament's interior. The ATP-DnaA-oriC complex binds and stabilizes one strand of the AT-rich DNA unwinding element (DUE), permitting loading of DNA polymerase. After initiation quickly degrades to an ADP-DnaA complex that is not apt for DNA replication. Binds acidic phospholipids. This Francisella tularensis subsp. holarctica (strain OSU18) protein is Chromosomal replication initiator protein DnaA.